Consider the following 295-residue polypeptide: Protoheme IX farnesyltransferase 2 (295 aa).

Transmembrane regions (helical) follow at residues isoleucine 9–alanine 29, leucine 36–phenylalanine 56, valine 85–alanine 105, leucine 108–leucine 128, glycine 135–serine 155, leucine 163–phenylalanine 183, isoleucine 209–alanine 229, glycine 230–threonine 250, and lysine 263–phenylalanine 283.

This sequence belongs to the UbiA prenyltransferase family. Protoheme IX farnesyltransferase subfamily.

The protein localises to the cell inner membrane. The catalysed reaction is heme b + (2E,6E)-farnesyl diphosphate + H2O = Fe(II)-heme o + diphosphate. It participates in porphyrin-containing compound metabolism; heme O biosynthesis; heme O from protoheme: step 1/1. Functionally, converts heme B (protoheme IX) to heme O by substitution of the vinyl group on carbon 2 of heme B porphyrin ring with a hydroxyethyl farnesyl side group. This is Protoheme IX farnesyltransferase 2 from Pseudomonas fluorescens (strain ATCC BAA-477 / NRRL B-23932 / Pf-5).